The primary structure comprises 1253 residues: Pleckstrin homology-like domain family B member 2 (1253 aa).

Basic and acidic residues predominate over residues 1-12; that stretch reads MEEHSYIQKELD. Disordered stretches follow at residues 1–43, 60–159, and 187–212; these read MEEH…PKKY, LTLS…KSHD, and DAGPPPISRSGAASMPSSPKQARKMS. Positions 29–43 are enriched in polar residues; sequence NDSQNMMESLSPKKY. A phosphoserine mark is found at Ser-71 and Ser-73. Residues 74–96 are compositionally biased toward polar residues; it reads PLGTSVRSSPSLAKIQGSKQFSY. A compositionally biased stretch (basic and acidic residues) spans 126-144; that stretch reads ADFDHYTGRDSERALRLSE. Phosphoserine is present on residues Ser-157, Ser-204, Ser-212, Ser-242, and Ser-245. Residues 265–286 form a disordered region; it reads NQLTPLSLPPRNSLGNSKRTKL. A phosphoserine mark is found at Ser-330, Ser-334, Ser-348, Ser-351, Ser-384, Ser-387, Ser-415, Ser-420, Ser-468, Ser-489, and Ser-501. Thr-504 carries the phosphothreonine modification. At Ser-513 the chain carries Phosphoserine. Residues 525-567 form a disordered region; sequence LSQSSASFFTPRSTRNDELLSDLTRTPPPPSSTFPKASSESSY. Residues Thr-550 and Thr-574 each carry the phosphothreonine modification. Coiled coils occupy residues 584 to 696 and 722 to 807; these read SQEL…LDNC and FEDL…LCNL. Thr-898 is modified (phosphothreonine). Positions 1032 to 1098 form a coiled coil; the sequence is IARIEEMERL…QKLIEKEVKI (67 aa). In terms of domain architecture, PH spans 1143 to 1246; the sequence is EKTCRGFLIK…WMDVIVTGAE (104 aa).

Interacts with FLNC. Interacts with AMOTL2; interaction may facilitate PHLDB2 localization to the myotube podosome cortex that surrounds the core. Part of a cortical microtubule stabilization complex (CMSC) composed of KANK1, PPFIA1, PPFIBP1, ERC1/ELKS, PHLDB2/LL5beta, CLASPs, KIF21A and possibly additional interactors; within CMSCs KANK1 and PHLDB2/LL5beta appear to be the core components for targeting of microtubule-binding proteins KIF21A and CLASPs, whereas PPFIA1, PPFIBP1 and ERC1/ELKS serve as scaffolds for protein clustering.

The protein localises to the cytoplasm. It localises to the cell cortex. It is found in the membrane. The protein resides in the cell projection. Its subcellular location is the podosome. Functionally, seems to be involved in the assembly of the postsynaptic apparatus. May play a role in acetyl-choline receptor (AChR) aggregation in the postsynaptic membrane. The chain is Pleckstrin homology-like domain family B member 2 (PHLDB2) from Homo sapiens (Human).